We begin with the raw amino-acid sequence, 501 residues long: ATP synthase subunit alpha (501 aa).

An ATP-binding site is contributed by 170-177 (GDRQTGKS).

It belongs to the ATPase alpha/beta chains family. F-type ATPases have 2 components, CF(1) - the catalytic core - and CF(0) - the membrane proton channel. CF(1) has five subunits: alpha(3), beta(3), gamma(1), delta(1), epsilon(1). CF(0) has three main subunits: a(1), b(2) and c(9-12). The alpha and beta chains form an alternating ring which encloses part of the gamma chain. CF(1) is attached to CF(0) by a central stalk formed by the gamma and epsilon chains, while a peripheral stalk is formed by the delta and b chains.

It is found in the cell membrane. It carries out the reaction ATP + H2O + 4 H(+)(in) = ADP + phosphate + 5 H(+)(out). Its function is as follows. Produces ATP from ADP in the presence of a proton gradient across the membrane. The alpha chain is a regulatory subunit. This chain is ATP synthase subunit alpha, found in Acholeplasma laidlawii (strain PG-8A).